The sequence spans 362 residues: Aminomethyltransferase (362 aa).

It belongs to the GcvT family. As to quaternary structure, the glycine cleavage system is composed of four proteins: P, T, L and H.

It catalyses the reaction N(6)-[(R)-S(8)-aminomethyldihydrolipoyl]-L-lysyl-[protein] + (6S)-5,6,7,8-tetrahydrofolate = N(6)-[(R)-dihydrolipoyl]-L-lysyl-[protein] + (6R)-5,10-methylene-5,6,7,8-tetrahydrofolate + NH4(+). In terms of biological role, the glycine cleavage system catalyzes the degradation of glycine. This Listeria monocytogenes serotype 4b (strain CLIP80459) protein is Aminomethyltransferase.